Reading from the N-terminus, the 257-residue chain is MDVIPAIDLLEGRCVRLYQGNYQQSEVYNENPVEVARQWADEGATRLHLVDLDGAKQGHPVNLDTIEAIVRAISIPVQVGGGLRDRQSIAQLIDLGVDRTIVGTVAVENPSLVQELCQAFPSKIAVGIDARNGKVATRGWLETSEVLATELAQQMAELGVSAIIYTDIHRDGTLQGPNREALRELANHIKIPVIASGGVSSLSDVLGLLALEPIGVTGVIIGKALYTGDVSLAEAVHAVGPGRWQDIPPDLGSSAFG.

The active-site Proton acceptor is aspartate 8. The Proton donor role is filled by aspartate 129.

The protein belongs to the HisA/HisF family.

It localises to the cytoplasm. It carries out the reaction 1-(5-phospho-beta-D-ribosyl)-5-[(5-phospho-beta-D-ribosylamino)methylideneamino]imidazole-4-carboxamide = 5-[(5-phospho-1-deoxy-D-ribulos-1-ylimino)methylamino]-1-(5-phospho-beta-D-ribosyl)imidazole-4-carboxamide. It participates in amino-acid biosynthesis; L-histidine biosynthesis; L-histidine from 5-phospho-alpha-D-ribose 1-diphosphate: step 4/9. This is 1-(5-phosphoribosyl)-5-[(5-phosphoribosylamino)methylideneamino] imidazole-4-carboxamide isomerase from Crocosphaera subtropica (strain ATCC 51142 / BH68) (Cyanothece sp. (strain ATCC 51142)).